A 53-amino-acid polypeptide reads, in one-letter code: Non-classical export protein 1 (53 aa).

Residues 7 to 29 form a helical membrane-spanning segment; the sequence is FLLGKFSDPLLAIMVGCLSYYVY.

This sequence belongs to the NCE101 family.

The protein localises to the membrane. Its function is as follows. Involved in a novel pathway of export of proteins that lack a cleavable signal sequence. May be part of the export machinery or may also be a substrate for non-classical export. In Saccharomyces cerevisiae (strain ATCC 204508 / S288c) (Baker's yeast), this protein is Non-classical export protein 1 (NCE101).